The sequence spans 284 residues: MNLLQKNKINLRPFTKWTGGKRQLLPHIQYLMPEKYNHFFEPFIGGGALFFELAPQKAVINDFNSELINCYRQMKDNPEQLIELLTNHQRENSKEYYLDLRSSDRDGRIDKMSEVERAARIMYMLRVDFNGLYRVNSKNQFNVPYGRYKNPKIVDKELIESISEYLNNNSIKIMSGDFEKAVKEAQDGDFVYFDPPYIPLSETSAFTSYTHEGFSYEDQVRLRDCFKQLDSKGVFVMLSNSSSPLAEELYKDFNIHKIEATRTNGAKSSSRGKITEIIVTNYGN.

S-adenosyl-L-methionine contacts are provided by Trp-17, Lys-21, Asp-62, and Asp-194.

It belongs to the N(4)/N(6)-methyltransferase family.

It carries out the reaction a 2'-deoxyadenosine in DNA + S-adenosyl-L-methionine = an N(6)-methyl-2'-deoxyadenosine in DNA + S-adenosyl-L-homocysteine + H(+). Its function is as follows. An alpha subtype methylase, recognizes the double-stranded sequence 5'-GATC-3', methylates A-2 on both strands, and protects the DNA from cleavage by the LlaDCHI endonuclease. The polypeptide is Type II methyltransferase M1.LlaDCHI (Lactococcus lactis subsp. cremoris (Streptococcus cremoris)).